A 572-amino-acid chain; its full sequence is Nuclear hormone receptor family member nhr-25 (572 aa).

The nuclear receptor DNA-binding region spans 15-90; the sequence is GEMCPVCGDR…MGMKMEAVRA (76 aa). 2 NR C4-type zinc fingers span residues 18–38 and 54–78; these read CPVCGDRVSGYHYGLLTCESC and CSAEANCHVDRTCRKRCPSCRFQKC. The 261-residue stretch at 307 to 567 folds into the NR LBD domain; it reads PTEKTVDHFY…PTPQATYTAV (261 aa).

The protein belongs to the nuclear hormone receptor family. Interacts with lin-39. Interacts with nob-1. Expressed in the epidermis, the developing somatic gonad, and a subset of other epithelial cells.

It localises to the nucleus. Orphan nuclear receptor and probable transcription activator, required during development. Plays a role in male tail tip morphogenesis regulating the expression of the transcription factor dmd-3 in a negative feedback loop. Regulates vulval precursor cell (VPC) differentiation, in concert with homeobox protein lin-39. Involved in promoting embryogenesis, in concert with homeobox protein nob-1. May play a role in modulation of lifespan and immunity. This chain is Nuclear hormone receptor family member nhr-25, found in Caenorhabditis elegans.